The primary structure comprises 63 residues: MPPNLTGYWRFVSQDNMDNYLRALDLNVALRKLVXLLKFDKEIVHEGNHMTIRTLXTXRNYXI.

Belongs to the calycin superfamily. Fatty-acid binding protein (FABP) family.

In terms of biological role, binds vitamin A2 in the eye lens and thus functions as a UV filter. Intracellular transport of retinol. The sequence is that of Iota-crystallin (CRBPI) from Gonatodes vittatus (Wiegmann's striped gecko).